The following is a 619-amino-acid chain: ATP-dependent zinc metalloprotease FtsH (619 aa).

The Cytoplasmic segment spans residues 1 to 11 (MSNTDPQPPQK). A helical membrane pass occupies residues 12–32 (LPLNWVVWTLAVALMLYYLPA). Residues 33-120 (MRDRPEPAIK…EVKEGHDASS (88 aa)) lie on the Periplasmic side of the membrane. Residues 121 to 141 (SKVILLSYLPWIMFMIILFWL) traverse the membrane as a helical segment. Over 142 to 619 (SRRTFRNFSG…IDECLQTGAS (478 aa)) the chain is Cytoplasmic. Position 216-223 (216-223 (GPPGTGKT)) interacts with ATP. Histidine 437 contacts Zn(2+). The active site involves glutamate 438. 2 residues coordinate Zn(2+): histidine 441 and aspartate 513.

This sequence in the central section; belongs to the AAA ATPase family. In the C-terminal section; belongs to the peptidase M41 family. Homohexamer. Requires Zn(2+) as cofactor.

It localises to the cell inner membrane. Acts as a processive, ATP-dependent zinc metallopeptidase for both cytoplasmic and membrane proteins. Plays a role in the quality control of integral membrane proteins. The protein is ATP-dependent zinc metalloprotease FtsH of Hahella chejuensis (strain KCTC 2396).